Consider the following 911-residue polypeptide: Protein translocase subunit SecA (911 aa).

ATP-binding positions include Gln87, 105–109 (GEGKT), and Asp510. Residues Cys896, Cys898, Cys907, and His908 each coordinate Zn(2+).

The protein belongs to the SecA family. As to quaternary structure, monomer and homodimer. Part of the essential Sec protein translocation apparatus which comprises SecA, SecYEG and auxiliary proteins SecDF-YajC and YidC. Zn(2+) serves as cofactor.

The protein resides in the cell inner membrane. Its subcellular location is the cytoplasm. It carries out the reaction ATP + H2O + cellular proteinSide 1 = ADP + phosphate + cellular proteinSide 2.. Its function is as follows. Part of the Sec protein translocase complex. Interacts with the SecYEG preprotein conducting channel. Has a central role in coupling the hydrolysis of ATP to the transfer of proteins into and across the cell membrane, serving both as a receptor for the preprotein-SecB complex and as an ATP-driven molecular motor driving the stepwise translocation of polypeptide chains across the membrane. The polypeptide is Protein translocase subunit SecA (Acinetobacter baumannii (strain SDF)).